The primary structure comprises 575 residues: TOX high mobility group box family member 3 (575 aa).

Disordered stretches follow at residues 189 to 258 (LGGA…QKPV) and 516 to 575 (QQLQ…VSIF). Residues 195 to 214 (SHTSPSPPASKSATPSPSSS) are compositionally biased toward low complexity. Over residues 222–238 (DANRAIGEKRTAPDSGK) the composition is skewed to basic and acidic residues. Residues 239–249 (KPKTPKKKKKK) show a composition bias toward basic residues. The segment at residues 254 to 322 (PQKPVSAYAL…EYLKALAAYR (69 aa)) is a DNA-binding region (HMG box). Low complexity predominate over residues 516-526 (QQLQHMQHQSQ). The segment covering 527 to 541 (PSPRQHSPVTSQITS) has biased composition (polar residues). Positions 548 to 575 (SPQPASQQHQPQIQSQTQTQVLPQVSIF) are enriched in low complexity.

Homodimer. Interacts (via HGM box) with CITED1 (via C-terminus); the interaction increases estrogen-response element (ERE)-dependent transcription and protection against cell death. Interacts with CREB1 (phosphorylated form). Interacts with CREB1; the interaction is not depolarization dependent. Interacts with CREBBP (via C-terminus).

The protein localises to the nucleus. In terms of biological role, transcriptional coactivator of the p300/CBP-mediated transcription complex. Activates transactivation through cAMP response element (CRE) sites. Protects against cell death by inducing antiapoptotic and repressing pro-apoptotic transcripts. Stimulates transcription from the estrogen-responsive or BCL-2 promoters. Required for depolarization-induced transcription activation of the C-FOS promoter in neurons. Associates with chromatin to the estrogen-responsive C3 promoter region. In Mus musculus (Mouse), this protein is TOX high mobility group box family member 3 (Tox3).